A 237-amino-acid polypeptide reads, in one-letter code: DNA repair protein RecO (237 aa).

This sequence belongs to the RecO family.

Its function is as follows. Involved in DNA repair and RecF pathway recombination. The chain is DNA repair protein RecO from Rickettsia africae (strain ESF-5).